Reading from the N-terminus, the 389-residue chain is Lipid-A-disaccharide synthase (389 aa).

The protein belongs to the LpxB family.

It carries out the reaction a lipid X + a UDP-2-N,3-O-bis[(3R)-3-hydroxyacyl]-alpha-D-glucosamine = a lipid A disaccharide + UDP + H(+). It participates in bacterial outer membrane biogenesis; LPS lipid A biosynthesis. In terms of biological role, condensation of UDP-2,3-diacylglucosamine and 2,3-diacylglucosamine-1-phosphate to form lipid A disaccharide, a precursor of lipid A, a phosphorylated glycolipid that anchors the lipopolysaccharide to the outer membrane of the cell. This chain is Lipid-A-disaccharide synthase, found in Paraburkholderia phymatum (strain DSM 17167 / CIP 108236 / LMG 21445 / STM815) (Burkholderia phymatum).